The following is a 372-amino-acid chain: sn-glycerol-3-phosphate import ATP-binding protein UgpC (372 aa).

Residues 2-233 (LDIQQLVKTY…PASTFVASFI (232 aa)) enclose the ABC transporter domain. An ATP-binding site is contributed by 35–42 (GPSGCGKS).

It belongs to the ABC transporter superfamily. sn-glycerol-3-phosphate importer (TC 3.A.1.1.3) family. As to quaternary structure, the complex is composed of two ATP-binding proteins (UgpC), two transmembrane proteins (UgpA and UgpE) and a solute-binding protein (UgpB).

It localises to the cell inner membrane. The catalysed reaction is sn-glycerol 3-phosphate(out) + ATP + H2O = sn-glycerol 3-phosphate(in) + ADP + phosphate + H(+). Functionally, part of the ABC transporter complex UgpBAEC involved in sn-glycerol-3-phosphate (G3P) import. Responsible for energy coupling to the transport system. The sequence is that of sn-glycerol-3-phosphate import ATP-binding protein UgpC from Vibrio vulnificus (strain YJ016).